A 404-amino-acid chain; its full sequence is Propionate kinase (404 aa).

Belongs to the acetokinase family. PduW subfamily.

Its subcellular location is the cytoplasm. The enzyme catalyses propanoate + ATP = propanoyl phosphate + ADP. It participates in polyol metabolism; 1,2-propanediol degradation. Its function is as follows. Works with phosphate acetyltransferase (pta) to capture exogenous propionate and regenerate propionyl-CoA during degradation of 1,2-propanediol (1,2-PD). The polypeptide is Propionate kinase (Klebsiella pneumoniae (strain 342)).